A 118-amino-acid polypeptide reads, in one-letter code: uncharacterized protein (118 aa).

Residues Cys-11 and Cys-14 are joined by a disulfide bond.

This sequence belongs to the ArsC family.

This is an uncharacterized protein from Bacillus subtilis (strain 168).